We begin with the raw amino-acid sequence, 590 residues long: O-fucosyltransferase 2 (590 aa).

Positions 1–16 are enriched in basic and acidic residues; the sequence is MGQERPNDEERPESRD. The segment at 1 to 26 is disordered; sequence MGQERPNDEERPESRDLGVYGCSPPH. Residues 67-87 form a helical; Signal-anchor for type II membrane protein membrane-spanning segment; that stretch reads TAIGVMAILGFFCLVNWFMLS. Asparagine 125 carries N-linked (GlcNAc...) asparagine glycosylation. 365-367 is a substrate binding site; that stretch reads HLR. 2 N-linked (GlcNAc...) asparagine glycosylation sites follow: asparagine 485 and asparagine 546.

Belongs to the glycosyltransferase GT106 family.

The protein resides in the membrane. It participates in glycan metabolism. This Arabidopsis thaliana (Mouse-ear cress) protein is O-fucosyltransferase 2.